We begin with the raw amino-acid sequence, 180 residues long: MALRIFVTGPAGVGKTTLVERVAREVDRWGYIVGGVITREVRRGGRRIGFKITALDTGEEGTLASLRGTSHLPGVPFGKYVVHVDEIERVAVPAIRRAIVEADLIVIDEIGPMEYTSNEFIRAVGEVLKSEKPLLAVVHRKFIDRFRPLGEVHTLSFENRNAEFGIILDRVMKELKGIRG.

ATP-binding positions include 9–16 (GPAGVGKT) and 104–111 (LIVIDEIG).

Belongs to the THEP1 NTPase family.

It carries out the reaction a ribonucleoside 5'-triphosphate + H2O = a ribonucleoside 5'-diphosphate + phosphate + H(+). Functionally, has nucleotide phosphatase activity towards ATP, GTP, CTP, TTP and UTP. May hydrolyze nucleoside diphosphates with lower efficiency. The protein is Nucleoside-triphosphatase THEP1 of Thermococcus kodakarensis (strain ATCC BAA-918 / JCM 12380 / KOD1) (Pyrococcus kodakaraensis (strain KOD1)).